Consider the following 299-residue polypeptide: Porphobilinogen deaminase (299 aa).

Residue C242 is modified to S-(dipyrrolylmethanemethyl)cysteine.

This sequence belongs to the HMBS family. Monomer. Dipyrromethane is required as a cofactor.

It carries out the reaction 4 porphobilinogen + H2O = hydroxymethylbilane + 4 NH4(+). Its pathway is porphyrin-containing compound metabolism; protoporphyrin-IX biosynthesis; coproporphyrinogen-III from 5-aminolevulinate: step 2/4. Tetrapolymerization of the monopyrrole PBG into the hydroxymethylbilane pre-uroporphyrinogen in several discrete steps. The protein is Porphobilinogen deaminase of Rickettsia typhi (strain ATCC VR-144 / Wilmington).